Here is a 470-residue protein sequence, read N- to C-terminus: Neuraminidase (470 aa).

Topologically, residues 1 to 6 (MNPNQK) are intravirion. The chain crosses the membrane as a helical span at residues 7-27 (IICISATGMTLSVVSLLIGIA). The segment at 11 to 33 (SATGMTLSVVSLLIGIANLGLNI) is involved in apical transport and lipid raft association. At 28 to 470 (NLGLNIGLHY…HDGAEIIYFK (443 aa)) the chain is on the virion surface side. Positions 36–88 (HYKVGDTPDAPTPNVNGTNSTTTIINNNTQNNFTNITNIVQNKNEERTFLNLT) are hypervariable stalk region. N-linked (GlcNAc...) asparagine; by host glycans are attached at residues Asn-51, Asn-54, Asn-62, Asn-67, Asn-70, and Asn-86. The interval 91-470 (LCEVNSWHIL…HDGAEIIYFK (380 aa)) is head of neuraminidase. 8 disulfide bridges follow: Cys-92-Cys-419, Cys-124-Cys-129, Cys-184-Cys-231, Cys-233-Cys-238, Cys-279-Cys-292, Cys-281-Cys-290, Cys-319-Cys-337, and Cys-423-Cys-449. Arg-118 lines the substrate pocket. An N-linked (GlcNAc...) asparagine; by host glycan is attached at Asn-146. Asp-151 serves as the catalytic Proton donor/acceptor. Arg-152 is a binding site for substrate. The N-linked (GlcNAc...) asparagine; by host glycan is linked to Asn-201. A substrate-binding site is contributed by 277–278 (EE). Arg-293 is a binding site for substrate. Residues Asp-294, Gly-298, and Asp-325 each coordinate Ca(2+). A substrate-binding site is contributed by Arg-372. The N-linked (GlcNAc...) asparagine; by host glycan is linked to Asn-402. Tyr-406 acts as the Nucleophile in catalysis.

The protein belongs to the glycosyl hydrolase 34 family. As to quaternary structure, homotetramer. Requires Ca(2+) as cofactor. In terms of processing, N-glycosylated.

It is found in the virion membrane. It localises to the host apical cell membrane. It catalyses the reaction Hydrolysis of alpha-(2-&gt;3)-, alpha-(2-&gt;6)-, alpha-(2-&gt;8)- glycosidic linkages of terminal sialic acid residues in oligosaccharides, glycoproteins, glycolipids, colominic acid and synthetic substrates.. Its activity is regulated as follows. Inhibited by the neuraminidase inhibitors zanamivir (Relenza) and oseltamivir (Tamiflu). These drugs interfere with the release of progeny virus from infected cells and are effective against all influenza strains. Resistance to neuraminidase inhibitors is quite rare. Functionally, catalyzes the removal of terminal sialic acid residues from viral and cellular glycoconjugates. Cleaves off the terminal sialic acids on the glycosylated HA during virus budding to facilitate virus release. Additionally helps virus spread through the circulation by further removing sialic acids from the cell surface. These cleavages prevent self-aggregation and ensure the efficient spread of the progeny virus from cell to cell. Otherwise, infection would be limited to one round of replication. Described as a receptor-destroying enzyme because it cleaves a terminal sialic acid from the cellular receptors. May facilitate viral invasion of the upper airways by cleaving the sialic acid moieties on the mucin of the airway epithelial cells. Likely to plays a role in the budding process through its association with lipid rafts during intracellular transport. May additionally display a raft-association independent effect on budding. Plays a role in the determination of host range restriction on replication and virulence. Sialidase activity in late endosome/lysosome traffic seems to enhance virus replication. The chain is Neuraminidase from Influenza A virus (strain A/Gull/Astrakhan/227/1984 H13N6).